Here is a 212-residue protein sequence, read N- to C-terminus: Protein-L-isoaspartate O-methyltransferase (212 aa).

Ser-60 is a catalytic residue.

It belongs to the methyltransferase superfamily. L-isoaspartyl/D-aspartyl protein methyltransferase family.

It is found in the cytoplasm. It catalyses the reaction [protein]-L-isoaspartate + S-adenosyl-L-methionine = [protein]-L-isoaspartate alpha-methyl ester + S-adenosyl-L-homocysteine. Its function is as follows. Catalyzes the methyl esterification of L-isoaspartyl residues in peptides and proteins that result from spontaneous decomposition of normal L-aspartyl and L-asparaginyl residues. It plays a role in the repair and/or degradation of damaged proteins. In Pseudomonas putida (strain ATCC 700007 / DSM 6899 / JCM 31910 / BCRC 17059 / LMG 24140 / F1), this protein is Protein-L-isoaspartate O-methyltransferase.